The sequence spans 261 residues: ATP synthase subunit a (261 aa).

A run of 6 helical transmembrane segments spans residues 45–65, 107–127, 133–153, 162–182, 209–229, and 232–252; these read ITNV…ILVL, VMTL…PLSF, MAVT…LGFM, MFWV…IEVI, IAGF…VTAI, and LELL…CVYL.

This sequence belongs to the ATPase A chain family. As to quaternary structure, F-type ATPases have 2 components, CF(1) - the catalytic core - and CF(0) - the membrane proton channel. CF(1) has five subunits: alpha(3), beta(3), gamma(1), delta(1), epsilon(1). CF(0) has four main subunits: a, b, b' and c.

Its subcellular location is the cell inner membrane. Key component of the proton channel; it plays a direct role in the translocation of protons across the membrane. The protein is ATP synthase subunit a of Cereibacter sphaeroides (strain ATCC 17029 / ATH 2.4.9) (Rhodobacter sphaeroides).